The primary structure comprises 79 residues: Sulfur carrier protein TusA (79 aa).

Cys-17 acts as the Cysteine persulfide intermediate in catalysis.

Belongs to the sulfur carrier protein TusA family.

The protein resides in the cytoplasm. Its function is as follows. Sulfur carrier protein which probably makes part of a sulfur-relay system. The polypeptide is Sulfur carrier protein TusA (Pasteurella multocida (strain Pm70)).